We begin with the raw amino-acid sequence, 358 residues long: Very long chain fatty acid elongase AAEL008004 (358 aa).

7 helical membrane passes run 26–46, 66–86, 115–135, 147–167, 171–191, 207–227, and 234–254; these read WPLMSSPFPTLALCLGYVYLV, LILYNFVQVVFSAWLFYEIGI, ACWWYYFSKFTEFFDTFFFVM, VIHHGCMPMSVWFGVKFTPGG, FFGLLNTFVHIVMYTYYLFTA, TSLQMVQFVAIMVHAFQLLFI, and AFVWWIGMHAVMFLFLFNEFY. Positions 285 to 295 are enriched in polar residues; sequence SAVSSNGSAIT. The tract at residues 285–322 is disordered; sequence SAVSSNGSAITANGHHGKNGSVHHHSNGSATSNGTSLL. Basic residues predominate over residues 299-310; it reads HHGKNGSVHHHS. A compositionally biased stretch (polar residues) spans 311 to 322; the sequence is NGSATSNGTSLL.

Belongs to the ELO family.

It is found in the membrane. The enzyme catalyses a very-long-chain acyl-CoA + malonyl-CoA + H(+) = a very-long-chain 3-oxoacyl-CoA + CO2 + CoA. Could be implicated in synthesis of very long chain fatty acids. The sequence is that of Very long chain fatty acid elongase AAEL008004 from Aedes aegypti (Yellowfever mosquito).